A 433-amino-acid chain; its full sequence is Trigger factor (433 aa).

The PPIase FKBP-type domain occupies 163-248; that stretch reads GDTVNIDFSG…VNEIKFKEVP (86 aa).

Belongs to the FKBP-type PPIase family. Tig subfamily.

Its subcellular location is the cytoplasm. It catalyses the reaction [protein]-peptidylproline (omega=180) = [protein]-peptidylproline (omega=0). Its function is as follows. Involved in protein export. Acts as a chaperone by maintaining the newly synthesized protein in an open conformation. Functions as a peptidyl-prolyl cis-trans isomerase. The sequence is that of Trigger factor from Staphylococcus aureus (strain COL).